The following is a 104-amino-acid chain: Phosphocarrier protein HPr (104 aa).

Residues 17–104 (ELSAIFMIRN…EVFNSGFGEL (88 aa)) enclose the HPr domain. H31 (pros-phosphohistidine intermediate) is an active-site residue.

The protein belongs to the HPr family.

It is found in the cytoplasm. General (non sugar-specific) component of the phosphoenolpyruvate-dependent sugar phosphotransferase system (sugar PTS). This major carbohydrate active-transport system catalyzes the phosphorylation of incoming sugar substrates concomitantly with their translocation across the cell membrane. The phosphoryl group from phosphoenolpyruvate (PEP) is transferred to the phosphoryl carrier protein HPr by enzyme I. Phospho-HPr then transfers it to the PTS EIIA domain. The sequence is that of Phosphocarrier protein HPr (ptsH) from Chlamydia muridarum (strain MoPn / Nigg).